Reading from the N-terminus, the 904-residue chain is Alanine--tRNA ligase (904 aa).

Histidine 594, histidine 598, cysteine 695, and histidine 699 together coordinate Zn(2+).

It belongs to the class-II aminoacyl-tRNA synthetase family. Zn(2+) is required as a cofactor.

Its subcellular location is the cytoplasm. The enzyme catalyses tRNA(Ala) + L-alanine + ATP = L-alanyl-tRNA(Ala) + AMP + diphosphate. Catalyzes the attachment of alanine to tRNA(Ala) in a two-step reaction: alanine is first activated by ATP to form Ala-AMP and then transferred to the acceptor end of tRNA(Ala). Also edits incorrectly charged Ser-tRNA(Ala) and Gly-tRNA(Ala) via its editing domain. The polypeptide is Alanine--tRNA ligase (Anaeromyxobacter sp. (strain Fw109-5)).